Consider the following 235-residue polypeptide: Auracyanin-B (235 aa).

Residues 1-21 (MSWRGSGRSNFRSRSSSNGGS) show a composition bias toward low complexity. Disordered regions lie at residues 1–27 (MSWR…SGGS) and 64–107 (ATPR…NVVN). The first 56 residues, 1–56 (MSWRGSGRSNFRSRSSSNGGSTFSGGSAGGPPLIVMMGLAFGAGLIMLIVMIASNA), serve as a signal peptide directing secretion. A propeptide spanning residues 57–80 (TAGGFVAATPRPTATPRPTAAPAP) is cleaved from the precursor. Over residues 69–86 (TATPRPTAAPAPTQPPAA) the composition is skewed to pro residues. Over residues 87-100 (QPTTAPATQAANAP) the composition is skewed to low complexity. The Plastocyanin-like domain occupies 111-235 (AQTVEVRAAP…GMKGTLTVTP (125 aa)). Cu cation contacts are provided by His152, Cys217, His222, and Met227.

This sequence belongs to the multicopper oxidase family. It depends on Cu cation as a cofactor. In terms of processing, glycosylated.

The protein resides in the cell membrane. Probably a soluble electron acceptor for the integral membrane protein electron transfer alternative complex III (ACIII). The protein is Auracyanin-B of Chloroflexus aurantiacus (strain ATCC 29366 / DSM 635 / J-10-fl).